The chain runs to 265 residues: uncharacterized protein (265 aa).

A signal peptide spans 1 to 22 (MGYFKRVLLYIIVMVLSVFIIG). Cysteine 23 carries N-palmitoyl cysteine lipidation. Residue cysteine 23 is the site of S-diacylglycerol cysteine attachment.

Belongs to the staphylococcal tandem lipoprotein family.

Its subcellular location is the cell membrane. This is an uncharacterized protein from Staphylococcus aureus (strain MSSA476).